A 64-amino-acid chain; its full sequence is Large ribosomal subunit protein bL28 (64 aa).

Belongs to the bacterial ribosomal protein bL28 family.

The polypeptide is Large ribosomal subunit protein bL28 (Campylobacter jejuni subsp. jejuni serotype O:6 (strain 81116 / NCTC 11828)).